The chain runs to 82 residues: uncharacterized protein (82 aa).

It belongs to the chlamydial CPn_0710/CT_666/TC_0037 family.

This is an uncharacterized protein from Chlamydia muridarum (strain MoPn / Nigg).